Reading from the N-terminus, the 186-residue chain is NADH dehydrogenase [ubiquinone] 1 beta subcomplex subunit 8, mitochondrial (186 aa).

The transit peptide at 1–28 (MAVARAGVLGVQWLQRASWNVMPLGART) directs the protein to the mitochondrion. A helical transmembrane segment spans residues 133-153 (LFGFLAFMIFMCWVGEVYPVY).

This sequence belongs to the complex I NDUFB8 subunit family. Complex I is composed of 45 different subunits.

It localises to the mitochondrion inner membrane. Accessory subunit of the mitochondrial membrane respiratory chain NADH dehydrogenase (Complex I), that is believed not to be involved in catalysis. Complex I functions in the transfer of electrons from NADH to the respiratory chain. The immediate electron acceptor for the enzyme is believed to be ubiquinone. This chain is NADH dehydrogenase [ubiquinone] 1 beta subcomplex subunit 8, mitochondrial (NDUFB8), found in Pongo abelii (Sumatran orangutan).